The sequence spans 283 residues: Pantothenate synthetase (283 aa).

26–33 (MGNLHEGH) contacts ATP. The Proton donor role is filled by H33. Q57 provides a ligand contact to (R)-pantoate. Q57 contacts beta-alanine. ATP is bound at residue 148 to 151 (GKKD). Q154 contributes to the (R)-pantoate binding site. 185–188 (LSSR) contributes to the ATP binding site.

This sequence belongs to the pantothenate synthetase family. Homodimer.

Its subcellular location is the cytoplasm. It carries out the reaction (R)-pantoate + beta-alanine + ATP = (R)-pantothenate + AMP + diphosphate + H(+). It participates in cofactor biosynthesis; (R)-pantothenate biosynthesis; (R)-pantothenate from (R)-pantoate and beta-alanine: step 1/1. Functionally, catalyzes the condensation of pantoate with beta-alanine in an ATP-dependent reaction via a pantoyl-adenylate intermediate. The protein is Pantothenate synthetase of Polaromonas naphthalenivorans (strain CJ2).